We begin with the raw amino-acid sequence, 269 residues long: Tryptophan synthase alpha chain (269 aa).

Catalysis depends on proton acceptor residues Glu-49 and Asp-60.

The protein belongs to the TrpA family. Tetramer of two alpha and two beta chains.

The enzyme catalyses (1S,2R)-1-C-(indol-3-yl)glycerol 3-phosphate + L-serine = D-glyceraldehyde 3-phosphate + L-tryptophan + H2O. Its pathway is amino-acid biosynthesis; L-tryptophan biosynthesis; L-tryptophan from chorismate: step 5/5. In terms of biological role, the alpha subunit is responsible for the aldol cleavage of indoleglycerol phosphate to indole and glyceraldehyde 3-phosphate. This chain is Tryptophan synthase alpha chain, found in Pseudomonas putida (strain ATCC 47054 / DSM 6125 / CFBP 8728 / NCIMB 11950 / KT2440).